The chain runs to 85 residues: UPF0297 protein lhv_0439 (85 aa).

Belongs to the UPF0297 family.

This is UPF0297 protein lhv_0439 from Lactobacillus helveticus (strain DPC 4571).